A 106-amino-acid polypeptide reads, in one-letter code: Small ribosomal subunit protein mS33 (106 aa).

Serine 2 bears the N-acetylserine mark. The span at 85 to 94 (LKKLRGKVKP) shows a compositional bias: basic residues. The segment at 85 to 106 (LKKLRGKVKPRKGEGKRAAKKK) is disordered. Basic and acidic residues predominate over residues 95–106 (RKGEGKRAAKKK).

It belongs to the mitochondrion-specific ribosomal protein mS33 family. As to quaternary structure, component of the mitochondrial ribosome small subunit (28S) which comprises a 12S rRNA and about 30 distinct proteins.

The protein localises to the mitochondrion. The sequence is that of Small ribosomal subunit protein mS33 from Bos taurus (Bovine).